Reading from the N-terminus, the 286-residue chain is Small ribosomal subunit protein uS15m (286 aa).

Residues 1–33 constitute a mitochondrion transit peptide; the sequence is MSIVGRNAILNLRISLCPLFMGKRSFVSSPVSN.

Belongs to the universal ribosomal protein uS15 family. As to quaternary structure, component of the mitochondrial small ribosomal subunit (mt-SSU). Mature yeast 74S mitochondrial ribosomes consist of a small (37S) and a large (54S) subunit. The 37S small subunit contains a 15S ribosomal RNA (15S mt-rRNA) and 34 different proteins. The 54S large subunit contains a 21S rRNA (21S mt-rRNA) and 46 different proteins. In terms of processing, the precursor is processed in two steps involving mitochondrial intermediate peptidase (MIP) and mitochondrial processing peptidase (MPP).

The protein localises to the mitochondrion. Functionally, component of the mitochondrial ribosome (mitoribosome), a dedicated translation machinery responsible for the synthesis of mitochondrial genome-encoded proteins, including at least some of the essential transmembrane subunits of the mitochondrial respiratory chain. The mitoribosomes are attached to the mitochondrial inner membrane and translation products are cotranslationally integrated into the membrane. The chain is Small ribosomal subunit protein uS15m (MRPS28) from Saccharomyces cerevisiae (strain ATCC 204508 / S288c) (Baker's yeast).